The chain runs to 252 residues: tRNA (guanine-N(1)-)-methyltransferase (252 aa).

S-adenosyl-L-methionine-binding positions include Gly-116 and 135–140 (LGDYVL).

This sequence belongs to the RNA methyltransferase TrmD family. In terms of assembly, homodimer.

The protein localises to the cytoplasm. The enzyme catalyses guanosine(37) in tRNA + S-adenosyl-L-methionine = N(1)-methylguanosine(37) in tRNA + S-adenosyl-L-homocysteine + H(+). Functionally, specifically methylates guanosine-37 in various tRNAs. This chain is tRNA (guanine-N(1)-)-methyltransferase, found in Limosilactobacillus fermentum (strain NBRC 3956 / LMG 18251) (Lactobacillus fermentum).